Reading from the N-terminus, the 1182-residue chain is MEGPSNPGENLGIISVNPNTCESIELTNQILAKTYTTSWTDMEVYARGNGRICTAYPDVDHPLQDVRGNVSSILERGERSGGFETHPPRDPVTPRERHGNIQTRGAVIAPTPFHVVAAIPQQTRKRRWDILDGMVRRTVSQSTVDPKTVVMCVYRREEEETYDVLDEEEQDDDLLGIPNPTPRRLRISQAGPQQNSWVDTRGRRAYGSQEEQDERTSTDQVSIFSHDETRELSSPLECPIVGCTASFVGPRRWEKAKSHIYGVHSLEEVREIPRGELICKGIVRCETCATLLPTSDRAKQAHRDDCRPYLPRKENIRRKRAAEREATEASAQQGIALRLERQGPYITPRDIEEPTNTTTESWWREKVATKRYLHRKEWPQWLDICRTVLLGYSASSQGERHQRQVMLLDLVRNHLHTRTARREQQQQRGKDNQEEEDRQKKEEKSLRNAWKPCASSVRQGGQPSSSQPKRLNRWSTAPKWLKQSGNCTRRRISMIFPGPPVEQPGVVSVDAEEVAKTIARRLTRGAAPGLDGWTRELLYPLTLDPALKMEIAAVVKDIINADVSMEVGRRLQATSLTVLRKPNGKYRPIGAESVWAKLASHIAISRVMKTAEKKFSGIQFGVGGHIEEAIAKIRKDFATKGSLAMLDGRNAYNAISRRAILEAVYGDSTWSPLWRLVSLLLGTTGEVGFYENGKLCHTWESTRGVRQGMVLGPLLFSIGTLATLRRLQQTFPEAQFTAYLDDVTVAAPPEELKNVCAATAEAMEALGIVNNADKTEVLELTGDTGFGTAVKRVREFLERTWPDPMSEEIREGVEKKAMETDRLFKAIVELPLYNRTRWRILAMSAMPRITFLLRNHDMQHTHRVASWFDERTTQVMEHILGQPMTERARNIAALPVSMGGCGIRRMAQVAEYAHQCAGEKGLQQRKTEEADQRQQDDLYATLGGADRQVFTANTAAGAGRPLTDAQVRLDDATFGVYLRERYCRVLPEGVKCLCGEDASNHHIHTGTKVHNKPRQMRHDIINSVFANGLRLCGFQCATEPRLNEVSKRRPDILIAGLDTYAVTDITVTYPGRVTVGNTAQGQRSVAAADPMKAALVAFQEKERKYSYWAIQNGLAFAPFVMLTNGAIFGKSRDWLRRVLRGQDHRLTVTTAFDGITADVVAAVLRGNVHVYSAAQARGETLR.

Disordered stretches follow at residues 77–97 (GERS…PRER), 163–220 (DVLD…STDQ), 317–339 (RRKR…ALRL), and 418–478 (RTAR…STAP). A compositionally biased stretch (acidic residues) spans 163–174 (DVLDEEEQDDDL). Positions 420 to 446 (ARREQQQQRGKDNQEEEDRQKKEEKSL) are enriched in basic and acidic residues. The segment covering 456 to 475 (SVRQGGQPSSSQPKRLNRWS) has biased composition (polar residues). The region spanning 560-790 (NADVSMEVGR…TGDTGFGTAV (231 aa)) is the Reverse transcriptase domain.

The catalysed reaction is DNA(n) + a 2'-deoxyribonucleoside 5'-triphosphate = DNA(n+1) + diphosphate. The sequence is that of Retrotransposable element SLACS 132 kDa protein from Trypanosoma brucei gambiense.